The sequence spans 196 residues: Small ribosomal subunit protein uS4c (196 aa).

The segment covering 1–14 has biased composition (basic residues); sequence MSRYRGPRLKKIRR. Residues 1–43 form a disordered region; the sequence is MSRYRGPRLKKIRRLGALPGLTRKTPKSGSNPKKKFHSGKKEQ. The region spanning 89-169 is the S4 RNA-binding domain; that stretch reads MRLDNILFRL…LPKHLTIDTL (81 aa).

It belongs to the universal ribosomal protein uS4 family. Part of the 30S ribosomal subunit. Contacts protein S5. The interaction surface between S4 and S5 is involved in control of translational fidelity.

It localises to the plastid. Its subcellular location is the chloroplast. In terms of biological role, one of the primary rRNA binding proteins, it binds directly to 16S rRNA where it nucleates assembly of the body of the 30S subunit. Functionally, with S5 and S12 plays an important role in translational accuracy. The polypeptide is Small ribosomal subunit protein uS4c (rps4) (Melica uniflora (Wood melick grass)).